Here is a 312-residue protein sequence, read N- to C-terminus: Malate dehydrogenase (312 aa).

NAD(+) is bound by residues 12-17 and Asp-36; that span reads GAGFTG. Substrate-binding residues include Arg-87 and Arg-93. Residues Asn-100 and 123-125 each bind NAD(+); that span reads LTN. Substrate is bound at residue Asn-125. Ser-149 bears the Phosphoserine mark. Position 156 (Arg-156) interacts with substrate. His-180 serves as the catalytic Proton acceptor.

The protein belongs to the LDH/MDH superfamily. MDH type 3 family.

The enzyme catalyses (S)-malate + NAD(+) = oxaloacetate + NADH + H(+). Catalyzes the reversible oxidation of malate to oxaloacetate. The chain is Malate dehydrogenase from Geobacillus sp. (strain WCH70).